Consider the following 356-residue polypeptide: Protein-glutamate methylesterase/protein-glutamine glutaminase (356 aa).

Residues 4–121 (KVLIVDDSAL…QSGMLEYTDL (118 aa)) enclose the Response regulatory domain. 4-aspartylphosphate is present on D55. Residues 156 to 349 (PLTSSEKLII…RRVLEFFAAH (194 aa)) enclose the CheB-type methylesterase domain. Active-site residues include S169, H195, and D291.

This sequence belongs to the CheB family. Post-translationally, phosphorylated by CheA. Phosphorylation of the N-terminal regulatory domain activates the methylesterase activity.

It localises to the cytoplasm. It carries out the reaction [protein]-L-glutamate 5-O-methyl ester + H2O = L-glutamyl-[protein] + methanol + H(+). It catalyses the reaction L-glutaminyl-[protein] + H2O = L-glutamyl-[protein] + NH4(+). Involved in chemotaxis. Part of a chemotaxis signal transduction system that modulates chemotaxis in response to various stimuli. Catalyzes the demethylation of specific methylglutamate residues introduced into the chemoreceptors (methyl-accepting chemotaxis proteins or MCP) by CheR. Also mediates the irreversible deamidation of specific glutamine residues to glutamic acid. In Thiobacillus denitrificans (strain ATCC 25259 / T1), this protein is Protein-glutamate methylesterase/protein-glutamine glutaminase.